We begin with the raw amino-acid sequence, 424 residues long: 3-phosphoshikimate 1-carboxyvinyltransferase (424 aa).

The 3-phosphoshikimate site is built by Lys21, Ser22, and Arg26. Lys21 is a phosphoenolpyruvate binding site. Phosphoenolpyruvate-binding residues include Gly91 and Arg119. Residues Ser164, Gln166, Asp310, and Lys337 each contribute to the 3-phosphoshikimate site. Gln166 lines the phosphoenolpyruvate pocket. Asp310 serves as the catalytic Proton acceptor. Phosphoenolpyruvate contacts are provided by Arg341 and Arg382.

This sequence belongs to the EPSP synthase family. As to quaternary structure, monomer.

The protein resides in the cytoplasm. The enzyme catalyses 3-phosphoshikimate + phosphoenolpyruvate = 5-O-(1-carboxyvinyl)-3-phosphoshikimate + phosphate. The protein operates within metabolic intermediate biosynthesis; chorismate biosynthesis; chorismate from D-erythrose 4-phosphate and phosphoenolpyruvate: step 6/7. In terms of biological role, catalyzes the transfer of the enolpyruvyl moiety of phosphoenolpyruvate (PEP) to the 5-hydroxyl of shikimate-3-phosphate (S3P) to produce enolpyruvyl shikimate-3-phosphate and inorganic phosphate. The chain is 3-phosphoshikimate 1-carboxyvinyltransferase from Campylobacter hominis (strain ATCC BAA-381 / DSM 21671 / CCUG 45161 / LMG 19568 / NCTC 13146 / CH001A).